Reading from the N-terminus, the 170-residue chain is Helix-loop-helix protein 3 (170 aa).

Low complexity predominate over residues 1 to 26; the sequence is MTASTSSTPSTSTKIPSSSKSSVTKQ. Disordered regions lie at residues 1–42 and 118–170; these read MTAS…VDQV and TPSP…TETY. Residues 26–39 are basic motif; degenerate; the sequence is QTKQKRNERERKRV. A bHLH domain is found at 26-79; sequence QTKQKRNERERKRVDQVNQGFVLLQERVPKAAGNKAKLSKVETLREAARYIQEL. Basic and acidic residues predominate over residues 30 to 40; that stretch reads KRNERERKRVD. Positions 40-79 are helix-loop-helix motif; that stretch reads DQVNQGFVLLQERVPKAAGNKAKLSKVETLREAARYIQEL. Over residues 143 to 157 the composition is skewed to low complexity; sequence SHYYQESSSSSASTS.

In terms of assembly, efficient DNA binding requires dimerization with another bHLH protein. Forms a heterodimer with hlh-2. In terms of tissue distribution, expressed in the ADL sensory neurons.

It is found in the nucleus. Functionally, probable transcriptional regulator. May mediate transcriptional activation by binding to the E-box motif 5'-CANNTG-3'. Plays a role in the differentiation of the hermaphrodite-specific motor neurons (HSN) that are required for normal egg laying. Might play a role in serotonin production by regulating expression of the tryptophan hydrolase tph-1 which catalyzes serotonin synthesis, in the HSN neurons. Also plays a role in HSN axon guidance towards the vulva and the ventral nerve cord, possibly by promoting the expression of the netrin receptor unc-40. Under feeding conditions, involved in the regulation of the srh-234 chemoreceptor encoding gene expression in the ADL sensory neurons. Together with hlh-2, involved in the induction of programmed cell death in the sister cells of the serotonergic neurosecretory motor (NSM) neurons, probably through the activation of egl-1 transcription. The chain is Helix-loop-helix protein 3 from Caenorhabditis elegans.